Consider the following 343-residue polypeptide: Isopentenyl-diphosphate delta-isomerase (343 aa).

A substrate-binding site is contributed by 9–10 (RK). FMN contacts are provided by residues Ser-67, 68–70 (AMT), Ser-98, and Asn-127. 98-100 (SQR) provides a ligand contact to substrate. Residue Gln-162 participates in substrate binding. Mg(2+) is bound at residue Glu-163. FMN-binding positions include Lys-194, Thr-224, 273–275 (GVR), and 294–295 (AA).

The protein belongs to the IPP isomerase type 2 family. In terms of assembly, homooctamer. Dimer of tetramers. Requires FMN as cofactor. NADPH serves as cofactor. Mg(2+) is required as a cofactor.

The protein localises to the cytoplasm. It catalyses the reaction isopentenyl diphosphate = dimethylallyl diphosphate. Functionally, involved in the biosynthesis of isoprenoids. Catalyzes the 1,3-allylic rearrangement of the homoallylic substrate isopentenyl (IPP) to its allylic isomer, dimethylallyl diphosphate (DMAPP). The polypeptide is Isopentenyl-diphosphate delta-isomerase (Xanthobacter autotrophicus (strain ATCC BAA-1158 / Py2)).